A 492-amino-acid chain; its full sequence is Probable cobyric acid synthase (492 aa).

Residues 252-444 (PIEVNIVKFS…FHGILENFEF (193 aa)) enclose the GATase cobBQ-type domain. C330 (nucleophile) is an active-site residue. H436 is a catalytic residue.

It belongs to the CobB/CobQ family. CobQ subfamily.

Its pathway is cofactor biosynthesis; adenosylcobalamin biosynthesis. In terms of biological role, catalyzes amidations at positions B, D, E, and G on adenosylcobyrinic A,C-diamide. NH(2) groups are provided by glutamine, and one molecule of ATP is hydrogenolyzed for each amidation. This Methanococcus maripaludis (strain C6 / ATCC BAA-1332) protein is Probable cobyric acid synthase.